Reading from the N-terminus, the 143-residue chain is Large ribosomal subunit protein uL11 (143 aa).

Belongs to the universal ribosomal protein uL11 family. As to quaternary structure, part of the ribosomal stalk of the 50S ribosomal subunit. Interacts with L10 and the large rRNA to form the base of the stalk. L10 forms an elongated spine to which L12 dimers bind in a sequential fashion forming a multimeric L10(L12)X complex. One or more lysine residues are methylated.

Functionally, forms part of the ribosomal stalk which helps the ribosome interact with GTP-bound translation factors. The chain is Large ribosomal subunit protein uL11 from Leptothrix cholodnii (strain ATCC 51168 / LMG 8142 / SP-6) (Leptothrix discophora (strain SP-6)).